The following is a 557-amino-acid chain: Thermosome subunit 2 (557 aa).

The segment at 527 to 557 (DLSTGGDDDEEGGAPGGMGGMGGMGGMGGAM) is disordered. Residues 539–557 (GAPGGMGGMGGMGGMGGAM) are compositionally biased toward gly residues.

It belongs to the TCP-1 chaperonin family. In terms of assembly, the thermosome or CCT complex is a oligomeric complex of two octameric double-ring structures; the complex is probably a heterooligomer of CCT1, CCT2 and CCT3 with yet unknown stoichiometry.

Its function is as follows. Molecular chaperone that assists in the folding or refolding of nascent or denatured proteins along with ATP hydrolysis. ATPase activity is highest in thermosome assemblies containing CCT1:CCT2, followed by assemblies containing CCT1:CCT2:CCT3. Seems to contribute to thermosome ATPase activity. Not required for growth. The sequence is that of Thermosome subunit 2 (cct2) from Haloferax volcanii (strain ATCC 29605 / DSM 3757 / JCM 8879 / NBRC 14742 / NCIMB 2012 / VKM B-1768 / DS2) (Halobacterium volcanii).